The sequence spans 409 residues: LL-diaminopimelate aminotransferase (409 aa).

The substrate site is built by Tyr-15 and Gly-42. Pyridoxal 5'-phosphate-binding positions include Tyr-72, Ser-108 to Lys-109, Tyr-132, Asn-187, Tyr-218, and Ser-246 to Ser-248. Substrate is bound by residues Lys-109, Tyr-132, and Asn-187. Residue Lys-249 is modified to N6-(pyridoxal phosphate)lysine. 2 residues coordinate pyridoxal 5'-phosphate: Arg-257 and Asn-292. Substrate contacts are provided by Asn-292 and Arg-388.

It belongs to the class-I pyridoxal-phosphate-dependent aminotransferase family. LL-diaminopimelate aminotransferase subfamily. In terms of assembly, homodimer. Pyridoxal 5'-phosphate is required as a cofactor.

The catalysed reaction is (2S,6S)-2,6-diaminopimelate + 2-oxoglutarate = (S)-2,3,4,5-tetrahydrodipicolinate + L-glutamate + H2O + H(+). It functions in the pathway amino-acid biosynthesis; L-lysine biosynthesis via DAP pathway; LL-2,6-diaminopimelate from (S)-tetrahydrodipicolinate (aminotransferase route): step 1/1. In terms of biological role, involved in the synthesis of meso-diaminopimelate (m-DAP or DL-DAP), required for both lysine and peptidoglycan biosynthesis. Catalyzes the direct conversion of tetrahydrodipicolinate to LL-diaminopimelate. The sequence is that of LL-diaminopimelate aminotransferase from Heliobacterium modesticaldum (strain ATCC 51547 / Ice1).